The sequence spans 828 residues: Periplasmic nitrate reductase (828 aa).

Residues 1–31 (MKLSRRSFMKANAVAAAAAAAGLSVPGVARA) constitute a signal peptide (tat-type signal). In terms of domain architecture, 4Fe-4S Mo/W bis-MGD-type spans 39–95 (IKWDKAPCRFCGTGCGVLVGTQQGRVVACQGDPDAPVNRGLNCIKGYFLPKIMYGKD). 4 residues coordinate [4Fe-4S] cluster: Cys-46, Cys-49, Cys-53, and Cys-81. Mo-bis(molybdopterin guanine dinucleotide) is bound by residues Lys-83, Gln-150, Asn-175, Cys-179, 212 to 219 (WGANMAEM), 243 to 247 (STYQH), 262 to 264 (QSD), Met-372, Gln-376, Asn-482, 508 to 509 (SD), Lys-531, Asp-558, and 718 to 727 (TGRVLEHWHT). Phe-794 is a binding site for substrate. Mo-bis(molybdopterin guanine dinucleotide) contacts are provided by Asn-802 and Lys-819.

Belongs to the prokaryotic molybdopterin-containing oxidoreductase family. NasA/NapA/NarB subfamily. Component of the periplasmic nitrate reductase NapAB complex composed of NapA and NapB. The cofactor is [4Fe-4S] cluster. It depends on Mo-bis(molybdopterin guanine dinucleotide) as a cofactor. Post-translationally, predicted to be exported by the Tat system. The position of the signal peptide cleavage has not been experimentally proven.

Its subcellular location is the periplasm. The enzyme catalyses 2 Fe(II)-[cytochrome] + nitrate + 2 H(+) = 2 Fe(III)-[cytochrome] + nitrite + H2O. Catalytic subunit of the periplasmic nitrate reductase complex NapAB. Receives electrons from NapB and catalyzes the reduction of nitrate to nitrite. The chain is Periplasmic nitrate reductase from Shigella flexneri.